Consider the following 256-residue polypeptide: Major prion protein 2 (256 aa).

The N-terminal stretch at 1–24 (MVKSHIGSWILVLFVAMWSDVALC) is a signal peptide. The segment at 25 to 233 (KKRPKPGGGW…ESEAYYQRGA (209 aa)) is interaction with GRB2, ERI3 and SYN1. The disordered stretch occupies residues 28-110 (PKPGGGWNTG…QWNKPSKPKT (83 aa)). A run of 5 repeats spans residues 54–62 (PQEGGDWGQ), 63–70 (PHGGGWGQ), 71–78 (PHVGGWGQ), 79–86 (PHGGGWGQ), and 87–95 (PHGGGGWGQ). The interval 54 to 95 (PQEGGDWGQPHGGGWGQPHVGGWGQPHGGGWGQPHGGGGWGQ) is 5 X 8 AA tandem repeats of P-H-G-G-G-W-G-Q. Positions 58–99 (GDWGQPHGGGWGQPHVGGWGQPHGGGWGQPHGGGGWGQGGTH) are enriched in gly residues. Residues histidine 64, glycine 65, glycine 66, histidine 72, glycine 74, histidine 80, glycine 81, glycine 82, histidine 88, glycine 90, and glycine 91 each coordinate Cu(2+). A disulfide bond links cysteine 182 and cysteine 217. 2 N-linked (GlcNAc...) asparagine glycosylation sites follow: asparagine 184 and asparagine 200. Residue alanine 233 is the site of GPI-anchor amidated alanine attachment. Residues 234 to 256 (SVILFSSPPVILLISFLIFLIVG) constitute a propeptide, removed in mature form.

Belongs to the prion family. Monomer and homodimer. Has a tendency to aggregate into amyloid fibrils containing a cross-beta spine, formed by a steric zipper of superposed beta-strands. Soluble oligomers may represent an intermediate stage on the path to fibril formation. Copper binding may promote oligomerization. Interacts with GRB2, APP, ERI3/PRNPIP and SYN1. Mislocalized cytosolically exposed PrP interacts with MGRN1; this interaction alters MGRN1 subcellular location and causes lysosomal enlargement. Interacts with KIAA1191.

The protein localises to the cell membrane. The protein resides in the golgi apparatus. In terms of biological role, its primary physiological function is unclear. Has cytoprotective activity against internal or environmental stresses. May play a role in neuronal development and synaptic plasticity. May be required for neuronal myelin sheath maintenance. May play a role in iron uptake and iron homeostasis. Soluble oligomers are toxic to cultured neuroblastoma cells and induce apoptosis (in vitro). Association with GPC1 (via its heparan sulfate chains) targets PRNP to lipid rafts. Also provides Cu(2+) or Zn(2+) for the ascorbate-mediated GPC1 deaminase degradation of its heparan sulfate side chains. This is Major prion protein 2 from Tragelaphus strepsiceros (Greater kudu).